A 71-amino-acid polypeptide reads, in one-letter code: Protein bdm (71 aa).

The chain is Protein bdm (bdm) from Escherichia coli (strain K12).